Reading from the N-terminus, the 111-residue chain is Nucleoid-associated protein Teth514_0034 (111 aa).

It belongs to the YbaB/EbfC family. As to quaternary structure, homodimer.

It is found in the cytoplasm. The protein localises to the nucleoid. Binds to DNA and alters its conformation. May be involved in regulation of gene expression, nucleoid organization and DNA protection. This Thermoanaerobacter sp. (strain X514) protein is Nucleoid-associated protein Teth514_0034.